Reading from the N-terminus, the 104-residue chain is Large ribosomal subunit protein uL24 (104 aa).

It belongs to the universal ribosomal protein uL24 family. In terms of assembly, part of the 50S ribosomal subunit.

In terms of biological role, one of two assembly initiator proteins, it binds directly to the 5'-end of the 23S rRNA, where it nucleates assembly of the 50S subunit. Functionally, one of the proteins that surrounds the polypeptide exit tunnel on the outside of the subunit. This is Large ribosomal subunit protein uL24 from Bartonella henselae (strain ATCC 49882 / DSM 28221 / CCUG 30454 / Houston 1) (Rochalimaea henselae).